The chain runs to 293 residues: Elongation factor Ts (293 aa).

Positions 80–83 (TDFV) are involved in Mg(2+) ion dislocation from EF-Tu.

Belongs to the EF-Ts family.

The protein resides in the cytoplasm. Its function is as follows. Associates with the EF-Tu.GDP complex and induces the exchange of GDP to GTP. It remains bound to the aminoacyl-tRNA.EF-Tu.GTP complex up to the GTP hydrolysis stage on the ribosome. This chain is Elongation factor Ts, found in Aeromonas salmonicida (strain A449).